An 80-amino-acid polypeptide reads, in one-letter code: uncharacterized protein (80 aa).

A helical transmembrane segment spans residues 12-32 (FKIIALILLIVLIINLSYKLF).

Its subcellular location is the membrane. This is an uncharacterized protein from Saccharomyces cerevisiae (strain ATCC 204508 / S288c) (Baker's yeast).